The primary structure comprises 235 residues: Probable deoxycytidine kinase FPV151 (235 aa).

Gly-30 to Thr-38 contributes to the ATP binding site. Residues Glu-53, Tyr-68, and Gln-79 each coordinate substrate. Catalysis depends on Glu-104, which acts as the Proton acceptor. The substrate site is built by Arg-105, Asp-110, and Glu-172.

It belongs to the DCK/DGK family.

The catalysed reaction is 2'-deoxycytidine + a ribonucleoside 5'-triphosphate = dCMP + a ribonucleoside 5'-diphosphate + H(+). The polypeptide is Probable deoxycytidine kinase FPV151 (Vertebrata (FPV)).